The sequence spans 354 residues: Probable cinnamyl alcohol dehydrogenase 1 (354 aa).

C47 is a Zn(2+) binding site. S49 is a binding site for NADP(+). Residues H69, E70, C100, C103, C106, C114, and C163 each contribute to the Zn(2+) site. NADP(+)-binding positions include T167, 188-193 (GLGGVG), 211-216 (SSSDKK), T251, G275, and 296-298 (SFI).

This sequence belongs to the zinc-containing alcohol dehydrogenase family. In terms of assembly, homodimer. The cofactor is Zn(2+).

It carries out the reaction (E)-cinnamyl alcohol + NADP(+) = (E)-cinnamaldehyde + NADPH + H(+). It catalyses the reaction (E)-coniferol + NADP(+) = (E)-coniferaldehyde + NADPH + H(+). The enzyme catalyses (E)-sinapyl alcohol + NADP(+) = (E)-sinapaldehyde + NADPH + H(+). The catalysed reaction is (E)-4-coumaroyl alcohol + NADP(+) = (E)-4-coumaraldehyde + NADPH + H(+). It carries out the reaction (E)-caffeyl alcohol + NADP(+) = (E)-caffeyl aldehyde + NADPH + H(+). It functions in the pathway aromatic compound metabolism; phenylpropanoid biosynthesis. Its function is as follows. Involved in lignin biosynthesis. Catalyzes the final step specific for the production of lignin monomers. Catalyzes the NADPH-dependent reduction of coniferaldehyde, 5-hydroxyconiferaldehyde, sinapaldehyde, 4-coumaraldehyde and caffeyl aldehyde to their respective alcohols. This chain is Probable cinnamyl alcohol dehydrogenase 1 (CAD1), found in Eucalyptus gunnii (Cider gum).